A 180-amino-acid polypeptide reads, in one-letter code: Large ribosomal subunit protein uL6c (180 aa).

Belongs to the universal ribosomal protein uL6 family. In terms of assembly, part of the 50S ribosomal subunit.

It localises to the plastid. It is found in the chloroplast. Binds 23S rRNA. The protein is Large ribosomal subunit protein uL6c (rpl6) of Pyropia yezoensis (Susabi-nori).